Here is a 310-residue protein sequence, read N- to C-terminus: Putative S-adenosyl-L-methionine-dependent methyltransferase MUL_4763 (310 aa).

Residues aspartate 137 and aspartate 166–leucine 167 each bind S-adenosyl-L-methionine.

Belongs to the UPF0677 family.

In terms of biological role, exhibits S-adenosyl-L-methionine-dependent methyltransferase activity. This chain is Putative S-adenosyl-L-methionine-dependent methyltransferase MUL_4763, found in Mycobacterium ulcerans (strain Agy99).